A 442-amino-acid polypeptide reads, in one-letter code: UPF0489 protein C5orf22 (442 aa).

The segment at 175–210 (SSAKKPKLALEDSENTASTNCDSSSEGLEKDTATQR) is disordered. Over residues 189–200 (NTASTNCDSSSE) the composition is skewed to polar residues.

This sequence belongs to the UPF0489 family.

This Homo sapiens (Human) protein is UPF0489 protein C5orf22 (C5orf22).